The primary structure comprises 491 residues: uncharacterized protein (491 aa).

Residue 266–273 (GIQGTGKS) participates in ATP binding.

This sequence belongs to the AAA ATPase family. Highly divergent.

Its subcellular location is the plastid. The protein localises to the chloroplast. This is an uncharacterized protein from Porphyra purpurea (Red seaweed).